The primary structure comprises 153 residues: MKVSASLVLLLAAAVLADDRCPPQDDPEQPPVLLAHPTDCDKFLICNHGTPVVSKCPPGLLWNDSQKQCDYPAQAQCAPGVTPNTEPAPKPSPNCPPEYDPDHMVYIPHETDCGKYYICDPYGVELEQTCPSGLHWNPVVNYCDFPELAQCEE.

Residues 1-17 (MKVSASLVLLLAAAVLA) form the signal peptide. Chitin-binding type-2 domains follow at residues 18-79 (DDRC…QCAP) and 92-153 (SPNC…QCEE). 2 disulfides stabilise this stretch: cysteine 56/cysteine 69 and cysteine 130/cysteine 143. Residue asparagine 63 is glycosylated (N-linked (GlcNAc...) asparagine).

In terms of processing, glycosylated. Adult peritrophic membrane.

Functionally, binds chitin but not cellulose. May be involved in the spatial organization of PM. The polypeptide is Peritrophin-1 (Aper1) (Anopheles gambiae (African malaria mosquito)).